The sequence spans 122 residues: Large ribosomal subunit protein uL14 (122 aa).

It belongs to the universal ribosomal protein uL14 family. In terms of assembly, part of the 50S ribosomal subunit. Forms a cluster with proteins L3 and L19. In the 70S ribosome, L14 and L19 interact and together make contacts with the 16S rRNA in bridges B5 and B8.

Its function is as follows. Binds to 23S rRNA. Forms part of two intersubunit bridges in the 70S ribosome. The protein is Large ribosomal subunit protein uL14 of Teredinibacter turnerae (strain ATCC 39867 / T7901).